The following is a 255-amino-acid chain: NAD kinase (255 aa).

Asp44 (proton acceptor) is an active-site residue. NAD(+)-binding positions include 44-45 (DG), His49, 114-115 (NE), Asp144, Ala152, 155-160 (SAYNLS), and Gln216.

This sequence belongs to the NAD kinase family. It depends on a divalent metal cation as a cofactor.

The protein localises to the cytoplasm. The catalysed reaction is NAD(+) + ATP = ADP + NADP(+) + H(+). Involved in the regulation of the intracellular balance of NAD and NADP, and is a key enzyme in the biosynthesis of NADP. Catalyzes specifically the phosphorylation on 2'-hydroxyl of the adenosine moiety of NAD to yield NADP. The protein is NAD kinase of Rickettsia canadensis (strain McKiel).